Reading from the N-terminus, the 25-residue chain is Neuromedin-U-25 (25 aa).

Position 25 is an asparagine amide (N25).

The protein belongs to the NmU family.

Its subcellular location is the secreted. Its function is as follows. Stimulates uterine smooth muscle contraction and causes selective vasoconstriction. The chain is Neuromedin-U-25 (NMU) from Gallus gallus (Chicken).